The following is a 226-amino-acid chain: Ribonuclease 3 (226 aa).

The RNase III domain maps to 7–129 (LPRLCRTLGY…IIGAVYLDSD (123 aa)). Glutamate 42 contacts Mg(2+). Residue aspartate 46 is part of the active site. Aspartate 115 and glutamate 118 together coordinate Mg(2+). Glutamate 118 is a catalytic residue. A DRBM domain is found at 156–226 (DAKTLLQEHL…AAQVLELLKK (71 aa)).

This sequence belongs to the ribonuclease III family. Homodimer. Mg(2+) is required as a cofactor.

It localises to the cytoplasm. The catalysed reaction is Endonucleolytic cleavage to 5'-phosphomonoester.. Its function is as follows. Digests double-stranded RNA. Involved in the processing of primary rRNA transcript to yield the immediate precursors to the large and small rRNAs (23S and 16S). Processes some mRNAs, and tRNAs when they are encoded in the rRNA operon. Processes pre-crRNA and tracrRNA of type II CRISPR loci if present in the organism. This is Ribonuclease 3 from Shewanella baltica (strain OS185).